Consider the following 79-residue polypeptide: Cytochrome b (79 aa).

The next 3 helical transmembrane spans lie at Thr-1 to Met-7, Trp-31 to Ile-52, and Trp-67 to Ala-79. Positions 37 and 51 each coordinate heme b.

Belongs to the cytochrome b family. The cytochrome bc1 complex contains 11 subunits: 3 respiratory subunits (MT-CYB, CYC1 and UQCRFS1), 2 core proteins (UQCRC1 and UQCRC2) and 6 low-molecular weight proteins (UQCRH/QCR6, UQCRB/QCR7, UQCRQ/QCR8, UQCR10/QCR9, UQCR11/QCR10 and a cleavage product of UQCRFS1). This cytochrome bc1 complex then forms a dimer. Heme b is required as a cofactor.

It localises to the mitochondrion inner membrane. Component of the ubiquinol-cytochrome c reductase complex (complex III or cytochrome b-c1 complex) that is part of the mitochondrial respiratory chain. The b-c1 complex mediates electron transfer from ubiquinol to cytochrome c. Contributes to the generation of a proton gradient across the mitochondrial membrane that is then used for ATP synthesis. The sequence is that of Cytochrome b (MT-CYB) from Corcorax melanoramphos (White-winged chough).